Here is a 164-residue protein sequence, read N- to C-terminus: Large ribosomal subunit protein uL10 (164 aa).

Belongs to the universal ribosomal protein uL10 family. Part of the ribosomal stalk of the 50S ribosomal subunit. The N-terminus interacts with L11 and the large rRNA to form the base of the stalk. The C-terminus forms an elongated spine to which L12 dimers bind in a sequential fashion forming a multimeric L10(L12)X complex.

Forms part of the ribosomal stalk, playing a central role in the interaction of the ribosome with GTP-bound translation factors. The sequence is that of Large ribosomal subunit protein uL10 (rplJ) from Helicobacter pylori (strain ATCC 700392 / 26695) (Campylobacter pylori).